The primary structure comprises 338 residues: Phenylalanine--tRNA ligase alpha subunit (338 aa).

E252 contributes to the Mg(2+) binding site.

The protein belongs to the class-II aminoacyl-tRNA synthetase family. Phe-tRNA synthetase alpha subunit type 1 subfamily. In terms of assembly, tetramer of two alpha and two beta subunits. The cofactor is Mg(2+).

It is found in the cytoplasm. The enzyme catalyses tRNA(Phe) + L-phenylalanine + ATP = L-phenylalanyl-tRNA(Phe) + AMP + diphosphate + H(+). The sequence is that of Phenylalanine--tRNA ligase alpha subunit from Pseudomonas syringae pv. syringae (strain B728a).